A 240-amino-acid polypeptide reads, in one-letter code: MAQTSKYKRVVLKLSGEALAGDKGFGINPIIIKSVAQQVAEVAKMDCEIAVIVGGGNIWRGKTGSDLGMDRGTADYMGMLATVMNALALQDSLEQLECDTRVLTSIEMKQVAEPYIRRRAIRHLEKKRVVIFAAGIGNPYFSTDTTAALRAAEVEADVILMGKNNVDGVYSADPKVDKNAVKYEHLTHIQMLQEGLQVMDSTASSFCMDNNIPLNVFSIMEEGNIKRAVMGEKIGTLITK.

ATP is bound at residue 13–16 (KLSG). The tract at residues 21–26 (GDKGFG) is involved in allosteric activation by GTP. Gly-55 lines the UMP pocket. ATP is bound by residues Gly-56 and Arg-60. UMP-binding positions include Asp-75 and 136-143 (IGNPYFST). ATP-binding residues include Asn-164, Tyr-170, and Asp-173.

The protein belongs to the UMP kinase family. As to quaternary structure, homohexamer.

It is found in the cytoplasm. The enzyme catalyses UMP + ATP = UDP + ADP. Its pathway is pyrimidine metabolism; CTP biosynthesis via de novo pathway; UDP from UMP (UMPK route): step 1/1. With respect to regulation, allosterically activated by GTP. Inhibited by UTP. In terms of biological role, catalyzes the reversible phosphorylation of UMP to UDP. The protein is Uridylate kinase of Staphylococcus haemolyticus (strain JCSC1435).